Consider the following 365-residue polypeptide: MAVVAPRTLLLLLSGALALTQTWAGSHSMRYFSTSVSRPGRGEPRFIAVGYVDDTQFVRFDSDAASQRMEPRAPWMEQEEPEYWDRQTQISKTNAQIELESLRIALRYYNQSEDGSHTIQRMYGCDVGSDGRFLRGYQQDAYDGKDYIASNEDLRSWTAADMAAEITKRKWEAAHFAEQLRAYLEGTCVEWLRRYLENGKETLQRTDAPKTHTTHQAVSDHEATLKCWALSFYPAEITLTWQRDGEDQTQDTELVETRPAGDGTFQKWAAVVVPSGQEQRYTCHVQHEGLPKPLTLRWEPSSQPTIPIVGIIAGLVLFGAVIAGAVVAAVRWRRKSSDRKGGSYSQAASSDSAQGSDVSLTACKV.

The N-terminal stretch at 1-24 (MAVVAPRTLLLLLSGALALTQTWA) is a signal peptide. The segment at 25–114 (GSHSMRYFST…ALRYYNQSED (90 aa)) is alpha-1. Residues 25–308 (GSHSMRYFST…EPSSQPTIPI (284 aa)) lie on the Extracellular side of the membrane. Asn110 is a glycosylation site (N-linked (GlcNAc...) asparagine). Residues 115 to 206 (GSHTIQRMYG…ENGKETLQRT (92 aa)) are alpha-2. Intrachain disulfides connect Cys125–Cys188 and Cys227–Cys283. The interval 207 to 298 (DAPKTHTTHQ…GLPKPLTLRW (92 aa)) is alpha-3. The Ig-like C1-type domain maps to 209–295 (PKTHTTHQAV…QHEGLPKPLT (87 aa)). Residues 299-308 (EPSSQPTIPI) are connecting peptide. The chain crosses the membrane as a helical span at residues 309–332 (VGIIAGLVLFGAVIAGAVVAAVRW). Residues 333-365 (RRKSSDRKGGSYSQAASSDSAQGSDVSLTACKV) lie on the Cytoplasmic side of the membrane. The interval 338–365 (DRKGGSYSQAASSDSAQGSDVSLTACKV) is disordered. The segment covering 342 to 359 (GSYSQAASSDSAQGSDVS) has biased composition (low complexity). Ser343 bears the Phosphoserine mark. Tyr344 bears the Phosphotyrosine mark. Residues Ser345, Ser349, Ser352, Ser356, and Ser359 each carry the phosphoserine modification.

It belongs to the MHC class I family. Heterodimer of an alpha chain and a beta chain (beta-2-microglobulin).

The protein localises to the membrane. Involved in the presentation of foreign antigens to the immune system. The chain is Class I histocompatibility antigen, Gogo-A*0501 alpha chain from Gorilla gorilla gorilla (Western lowland gorilla).